Consider the following 112-residue polypeptide: uncharacterized protein (112 aa).

Helical transmembrane passes span 33-53 (PSPL…PFGA), 58-78 (LYIY…NVCT), and 91-111 (CVYV…LLFV).

Its subcellular location is the membrane. This is an uncharacterized protein from Saccharomyces cerevisiae (strain ATCC 204508 / S288c) (Baker's yeast).